The chain runs to 78 residues: Large ribosomal subunit protein bL28 (78 aa).

The protein belongs to the bacterial ribosomal protein bL28 family.

In Methylococcus capsulatus (strain ATCC 33009 / NCIMB 11132 / Bath), this protein is Large ribosomal subunit protein bL28.